A 224-amino-acid chain; its full sequence is Steroid receptor RNA activator 1 (224 aa).

2 disordered regions span residues 1-90 (MAEL…EPTS) and 201-224 (AANE…QQAS). Ser-48, Ser-57, and Ser-75 each carry phosphoserine. Residues 58-76 (PGPPPMGPPPPSSKAPRSP) are compositionally biased toward pro residues. Positions 201 to 215 (AANEEKSAATAEKNH) are enriched in basic and acidic residues.

Belongs to the SRA1 family. SRA1 RNA exists in a ribonucleoprotein complex containing NCOA1. The RNA also forms a complex with PUS1 and RARG in the nucleus. Interacts with AR. In terms of tissue distribution, highly expressed in liver and skeletal muscle and to a lesser extent in brain. Also expressed in both normal and tumorigenic breast epithelial cell lines. Significantly up-regulated in human tumors of the breast, ovary, and uterus.

The protein localises to the nucleus. The protein resides in the cytoplasm. In terms of biological role, functional RNA which acts as a transcriptional coactivator that selectively enhances steroid receptor-mediated transactivation ligand-independently through a mechanism involving the modulating N-terminal domain (AF-1) of steroid receptors. Also mediates transcriptional coactivation of steroid receptors ligand-dependently through the steroid-binding domain (AF-2). Enhances cellular proliferation and differentiation and promotes apoptosis in vivo. May play a role in tumorigenesis. The chain is Steroid receptor RNA activator 1 from Homo sapiens (Human).